The chain runs to 337 residues: Glyceraldehyde-3-phosphate dehydrogenase 2 (337 aa).

Residues 11–12 (RI), Asp-35, Arg-80, and Thr-122 each bind NADP(+). D-glyceraldehyde 3-phosphate contacts are provided by residues 153-155 (SCT), Thr-184, Arg-199, 212-213 (TG), and Arg-235. Catalysis depends on Cys-154, which acts as the Nucleophile. Asn-317 lines the NADP(+) pocket.

As to quaternary structure, homotetramer.

It localises to the cytoplasm. The enzyme catalyses D-glyceraldehyde 3-phosphate + phosphate + NADP(+) = (2R)-3-phospho-glyceroyl phosphate + NADPH + H(+). It catalyses the reaction D-glyceraldehyde 3-phosphate + phosphate + NAD(+) = (2R)-3-phospho-glyceroyl phosphate + NADH + H(+). Its pathway is carbohydrate biosynthesis; Calvin cycle. Gap2 has a major role in carbon fixation as a component of the Calvin cycle. Catalyzes the oxidative phosphorylation of glyceraldehyde 3-phosphate (G3P) to 1,3-bisphosphoglycerate (BPG) using the cofactor NADP. The first reaction step involves the formation of a hemiacetal intermediate between G3P and a cysteine residue, and this hemiacetal intermediate is then oxidized to a thioester, with concomitant reduction of NADP to NADPH. The reduced NADPH is then exchanged with the second NAD, and the thioester is attacked by a nucleophilic inorganic phosphate to produce BPG. This Nostoc sp. (strain PCC 7120 / SAG 25.82 / UTEX 2576) protein is Glyceraldehyde-3-phosphate dehydrogenase 2 (gap2).